We begin with the raw amino-acid sequence, 212 residues long: Putative 3-methyladenine DNA glycosylase (212 aa).

Belongs to the DNA glycosylase MPG family.

This Frankia casuarinae (strain DSM 45818 / CECT 9043 / HFP020203 / CcI3) protein is Putative 3-methyladenine DNA glycosylase.